The primary structure comprises 611 residues: Chaperone protein DnaK (611 aa).

Thr172 bears the Phosphothreonine; by autocatalysis mark. The interval 575–611 (AAQAAQAQQDGGNESADKQDDNVVDADYEEVNDDDKK) is disordered. The segment covering 596-611 (NVVDADYEEVNDDDKK) has biased composition (acidic residues).

Belongs to the heat shock protein 70 family.

In terms of biological role, acts as a chaperone. This is Chaperone protein DnaK from Shouchella clausii (strain KSM-K16) (Alkalihalobacillus clausii).